Here is a 67-residue protein sequence, read N- to C-terminus: Small ribosomal subunit protein eS17 (67 aa).

This sequence belongs to the eukaryotic ribosomal protein eS17 family.

This Thermococcus onnurineus (strain NA1) protein is Small ribosomal subunit protein eS17.